The sequence spans 318 residues: NLP effector protein 9 (318 aa).

The N-terminal stretch at 1–19 (MRLFAFLWSSVAFLSTVQA) is a signal peptide. Low complexity predominate over residues 24–35 (TASQTQDDSSTP). Disordered regions lie at residues 24 to 43 (TASQTQDDSSTPTPTPPDKY) and 50 to 93 (LRTK…PAPT). Over residues 55-65 (PMATPNRTIMP) the composition is skewed to polar residues. Asn-60 carries an N-linked (GlcNAc...) asparagine glycan. Residues 73–93 (PEPPTPEPTYLPTLSPTPAPT) are compositionally biased toward pro residues. A Conserved undecapeptide motif I motif is present at residues 185 to 195 (AIMYSWYFPKD). The Hepta-peptide GHRHDWE motif II motif lies at 202 to 208 (GHRHDWE).

The protein belongs to the Necrosis inducing protein (NPP1) family.

Its subcellular location is the secreted. Functionally, secreted effector that contributes to virulence during infection by P.capsici. Induces distinct chlorosis at 3 days after inoculation of host C.annuum leaves, and all the chlorotic areas gradually turn brown and become moderately necrotic at 7 days after inoculation. Caused only small necrotic areas at 7 days after non-host N.benthamiana leaves infection. The sequence is that of NLP effector protein 9 from Phytophthora capsici.